Consider the following 1051-residue polypeptide: Inactive tyrosine-protein kinase 7 (1051 aa).

The first 22 residues, methionine 1–alanine 22, serve as a signal peptide directing secretion. Ig-like C2-type domains follow at residues lysine 23–serine 105, serine 115–threonine 204, proline 213–leucine 298, proline 308–threonine 388, proline 393–glutamate 472, proline 487–glutamine 566, and valine 573–tyrosine 661. Topologically, residues lysine 23–threonine 685 are extracellular. A disulfide bridge connects residues cysteine 40 and cysteine 88. An N-linked (GlcNAc...) asparagine glycan is attached at asparagine 103. Cysteine 137 and cysteine 187 are oxidised to a cystine. Asparagine 202, asparagine 255, and asparagine 264 each carry an N-linked (GlcNAc...) asparagine glycan. 5 disulfide bridges follow: cysteine 234/cysteine 282, cysteine 326/cysteine 372, cysteine 414/cysteine 462, cysteine 505/cysteine 551, and cysteine 594/cysteine 645. 3 N-linked (GlcNAc...) asparagine glycosylation sites follow: asparagine 444, asparagine 548, and asparagine 627. The helical transmembrane segment at isoleucine 686–tyrosine 706 threads the bilayer. Over cysteine 707–alanine 1051 the chain is Cytoplasmic. The Protein kinase; inactive domain maps to leucine 777 to aspartate 1048.

The protein belongs to the protein kinase superfamily. Tyr protein kinase family. Insulin receptor subfamily. As to expression, expressed in bone marrow, spleen, bursa, thymus and brain. Weakly expressed in fibroblasts. Also expressed in embryonic liver.

It localises to the membrane. Inactive tyrosine kinase involved in Wnt signaling. pathway. In Gallus gallus (Chicken), this protein is Inactive tyrosine-protein kinase 7 (PTK7).